Reading from the N-terminus, the 566-residue chain is Arginine--tRNA ligase (566 aa).

The short motif at 129–139 is the 'HIGH' region element; that stretch reads ANPTGPLHIGH.

The protein belongs to the class-I aminoacyl-tRNA synthetase family. In terms of assembly, monomer.

It localises to the cytoplasm. The catalysed reaction is tRNA(Arg) + L-arginine + ATP = L-arginyl-tRNA(Arg) + AMP + diphosphate. This chain is Arginine--tRNA ligase, found in Wolbachia pipientis subsp. Culex pipiens (strain wPip).